A 265-amino-acid chain; its full sequence is Urease accessory protein UreH (265 aa).

This sequence belongs to the UreD family. In terms of assembly, ureH, UreF and UreG form a complex that acts as a GTP-hydrolysis-dependent molecular chaperone, activating the urease apoprotein by helping to assemble the nickel containing metallocenter of UreC. The UreE protein probably delivers the nickel.

It localises to the cytoplasm. In terms of biological role, required for maturation of urease via the functional incorporation of the urease nickel metallocenter. This chain is Urease accessory protein UreH, found in Helicobacter pylori (strain J99 / ATCC 700824) (Campylobacter pylori J99).